A 604-amino-acid chain; its full sequence is Protein CBFA2T1 (604 aa).

Residues 32–114 (TEKHSTMPDS…SSSSLANQQL (83 aa)) form a disordered region. At S41 the chain carries Phosphoserine. The segment covering 63–86 (QGAPRTSSFTPTTLTNGTSHSPTA) has biased composition (polar residues). Over residues 95–114 (NGFSNGPSSSSSSSLANQQL) the composition is skewed to low complexity. One can recognise a TAFH domain in the interval 120-215 (ARQLSKLKRF…NPAQYLAQHE (96 aa)). A disordered region spans residues 230–298 (SELLLDVNEN…LPHPTPPPPQ (69 aa)). A compositionally biased stretch (basic and acidic residues) spans 238–264 (ENGKRRTPDRTKENGFDREPLHSEHPS). Positions 271 to 285 (SPGQRYSPNNGLSYQ) are enriched in polar residues. Positions 289–298 (LPHPTPPPPQ) are enriched in pro residues. Positions 337–383 (QEEMIDHRLTDREWAEEWKHLDHLLNCIMDMVEKTRRSLTVLRRCQE) are important for oligomerization. The segment at 337–383 (QEEMIDHRLTDREWAEEWKHLDHLLNCIMDMVEKTRRSLTVLRRCQE) is nervy homology region 2 (NHR2). Positions 401 to 423 (DLKKGGGSSSSHSRQQSPVNPDP) are disordered. Position 417 is a phosphoserine (S417). The nervy homology region 3 (NHR3) stretch occupies residues 443-492 (EEIWKKAEEAVNEVKRQAMTELQKAVSEAERKAHDMITTERAKMERTVAE). Zn(2+)-binding residues include C515, C518, C526, C529, C535, C539, H547, and C551. The segment at 515–551 (CWNCGRKASETCSGCNTARYCGSFCQHKDWEKHHHIC) adopts an MYND-type zinc-finger fold. Residues 557–576 (AQQQGDTPAVSSSVTPNSGA) show a composition bias toward polar residues. A disordered region spans residues 557 to 604 (AQQQGDTPAVSSSVTPNSGAGSPMDTPPAATPRSTTPGTPSTIETTPR). Low complexity predominate over residues 587–604 (TPRSTTPGTPSTIETTPR).

Belongs to the CBFA2T family. Homooligomer. Homotetramerization is mediated by nervy homology region 2 (NRH2). Can interact with CBFA2T2 and CBFA2T3; heterotetramerization between members of the CBFA2T family is proposed. Interacts with TCF12, SIN3A, HDAC1, HDAC2, HDAC3, NCOR1, NCOR2. Interacts with ATN1 (via its N-terminus); the interaction enhances the transcriptional repression. Interacts (via its N-terminus) with ZBTB16; the interaction increases the transcription repression activity of ZBTB16. AML1-MTG8/ETO fusion protein interacts with CBFB. AML1-MTG8/ETO is part of a stable transcription factor complex AETFC in leukemic cells; AETFC formation seems to be involved in recruitment of EP300. AML1-MTG8/ETO nervy homology region 2-mediated oligomerization is proposed to be homotypic, required for AML1-MTG8/ETO-mediated transformation of primary hematopoietic cells and is required for AML1-MTG8/ETO interaction with TCF12. As to expression, most abundantly expressed in brain. Lower levels in lung, heart, testis and ovary.

It localises to the nucleus. Its function is as follows. Transcriptional corepressor which facilitates transcriptional repression via its association with DNA-binding transcription factors and recruitment of other corepressors and histone-modifying enzymes. Can repress the expression of MMP7 in a ZBTB33-dependent manner. Can repress transactivation mediated by TCF12. Acts as a negative regulator of adipogenesis. The AML1-MTG8/ETO fusion protein frequently found in leukemic cells is involved in leukemogenesis and contributes to hematopoietic stem/progenitor cell self-renewal. The polypeptide is Protein CBFA2T1 (RUNX1T1) (Homo sapiens (Human)).